The chain runs to 341 residues: Ferrochelatase (341 aa).

Fe cation contacts are provided by histidine 196 and glutamate 277.

Belongs to the ferrochelatase family.

It localises to the cytoplasm. The enzyme catalyses heme b + 2 H(+) = protoporphyrin IX + Fe(2+). The protein operates within porphyrin-containing compound metabolism; protoheme biosynthesis; protoheme from protoporphyrin-IX: step 1/1. Its function is as follows. Catalyzes the ferrous insertion into protoporphyrin IX. In Synechococcus sp. (strain JA-3-3Ab) (Cyanobacteria bacterium Yellowstone A-Prime), this protein is Ferrochelatase.